Consider the following 62-residue polypeptide: ATP synthase subunit epsilon, mitochondrial (62 aa).

At T52 the chain carries Phosphothreonine.

The protein belongs to the eukaryotic ATPase epsilon family. In terms of assembly, F-type ATPases have 2 components, CF(1) - the catalytic core - and CF(0) - the membrane proton channel. CF(1) has five subunits: alpha(3), beta(3), gamma(1), delta(1), epsilon(1). CF(0) has three main subunits: a, b and c.

The protein resides in the mitochondrion. It localises to the mitochondrion inner membrane. In terms of biological role, mitochondrial membrane ATP synthase (F(1)F(0) ATP synthase or Complex V) produces ATP from ADP in the presence of a proton gradient across the membrane which is generated by electron transport complexes of the respiratory chain. F-type ATPases consist of two structural domains, F(1) - containing the extramembraneous catalytic core, and F(0) - containing the membrane proton channel, linked together by a central stalk and a peripheral stalk. During catalysis, ATP synthesis in the catalytic domain of F(1) is coupled via a rotary mechanism of the central stalk subunits to proton translocation. Part of the complex F(1) domain and of the central stalk which is part of the complex rotary element. Rotation of the central stalk against the surrounding alpha(3)beta(3) subunits leads to hydrolysis of ATP in three separate catalytic sites on the beta subunits. This chain is ATP synthase subunit epsilon, mitochondrial (ATP15), found in Saccharomyces cerevisiae (strain ATCC 204508 / S288c) (Baker's yeast).